A 493-amino-acid chain; its full sequence is Transcript termination protein OPG145 (493 aa).

A Helicase ATP-binding domain is found at 100–256 (MIESKRPLYI…NSIINIAKLS (157 aa)). 113–120 (LACGFGKT) is an ATP binding site. The DESH box motif lies at 206–209 (DESH). A Helicase C-terminal domain is found at 309–456 (ILDTLVEEFK…IISLSVDKLG (148 aa)).

This sequence belongs to the helicase family. Poxviruses subfamily. As to quaternary structure, interacts with OPG087. Might be part of a transcription complex composed at least of OPG087, OPG110, and OPG145.

It localises to the virion. Functionally, DNA helicase which seems to act as a postreplicative transcription termination factor. Involved in ATP-dependent release of nascent RNA. Forms a stable complex with single-stranded DNA, and to a lesser extent RNA. The protein is Transcript termination protein OPG145 (OPG145) of Homo sapiens (Human).